Consider the following 446-residue polypeptide: RUN domain-containing protein 3A (446 aa).

The interval 1–298 is interaction with RAP2A; the sequence is MEASFVQTTM…LQLQLEEAAA (298 aa). The RUN domain maps to 52–189; the sequence is DDSSEEFVNF…IDFSFCLKGE (138 aa). A Phosphothreonine modification is found at Thr-215. A disordered region spans residues 216 to 239; that stretch reads DEEERHSAESSTSEDNSPEHPYLP. A Phosphoserine modification is found at Ser-232. Residues 267–322 adopt a coiled-coil conformation; sequence YLEELVRLRESQLKDLEAENRRLQLQLEEAAAQNQREKRELEGVILELQEQLTGLI. Polar residues predominate over residues 372-384; it reads PLSAEASLSSDSQ. Positions 372–404 are disordered; that stretch reads PLSAEASLSSDSQRLGEGTRDEEPWGPIGKDPT. Ser-416 and Ser-419 each carry phosphoserine.

The protein belongs to the RUNDC3 family. Interacts with the GTP-bound form of RAP2A.

In terms of biological role, may act as an effector of RAP2A in neuronal cells. The polypeptide is RUN domain-containing protein 3A (RUNDC3A) (Homo sapiens (Human)).